A 519-amino-acid polypeptide reads, in one-letter code: GTPase Der (519 aa).

Acidic residues-rich tracts occupy residues 1-12 and 30-54; these read MDVEGAFADEEE and GYEDSDDDFDAEDFDETEFSNPDFG. The interval 1 to 54 is disordered; sequence MDVEGAFADEEELAPHGGWASADFDPAEFGYEDSDDDFDAEDFDETEFSNPDFG. EngA-type G domains follow at residues 81-244 and 254-427; these read CTVA…PEEP and RRVA…DNWD. Residues 87–94, 134–138, 196–199, 260–267, 307–311, and 372–375 contribute to the GTP site; these read GRPNVGKS, DTGGW, NKFD, GKPNVGKS, DTAGL, and NKWD. The 83-residue stretch at 428 to 510 folds into the KH-like domain; it reads RRISTGQLNT…PVRIAVRVRE (83 aa).

Belongs to the TRAFAC class TrmE-Era-EngA-EngB-Septin-like GTPase superfamily. EngA (Der) GTPase family. Associates with the 50S ribosomal subunit.

In terms of biological role, GTPase that plays an essential role in the late steps of ribosome biogenesis. The chain is GTPase Der from Corynebacterium glutamicum (strain ATCC 13032 / DSM 20300 / JCM 1318 / BCRC 11384 / CCUG 27702 / LMG 3730 / NBRC 12168 / NCIMB 10025 / NRRL B-2784 / 534).